We begin with the raw amino-acid sequence, 465 residues long: D-arabinitol 4-dehydrogenase (465 aa).

It belongs to the mannitol dehydrogenase family.

The enzyme catalyses D-arabinitol + NAD(+) = D-xylulose + NADH + H(+). It participates in carbohydrate metabolism; D-arabinitol metabolism. This is D-arabinitol 4-dehydrogenase (dalD) from Ralstonia nicotianae (strain ATCC BAA-1114 / GMI1000) (Ralstonia solanacearum).